The sequence spans 102 residues: Citrate lyase acyl carrier protein (102 aa).

At Ser-14 the chain carries O-(phosphoribosyl dephospho-coenzyme A)serine.

The protein belongs to the CitD family. In terms of assembly, oligomer with a subunit composition of (alpha,beta,gamma)6.

It is found in the cytoplasm. Its function is as follows. Covalent carrier of the coenzyme of citrate lyase. This Streptococcus equi subsp. zooepidemicus (strain MGCS10565) protein is Citrate lyase acyl carrier protein.